We begin with the raw amino-acid sequence, 855 residues long: Cone cGMP-specific 3',5'-cyclic phosphodiesterase subunit alpha' (855 aa).

GAF domains lie at 70-219 and 251-428; these read SVEL…SIIL and DVER…GWSL. Residues Ser-92, Ser-116, 164 to 167, and Thr-171 each bind 3',5'-cyclic GMP; that span reads DKQT. The region spanning 481–814 is the PDEase domain; that stretch reads EEKQLVTILK…VEWKSLADEY (334 aa). His-557 (proton donor) is an active-site residue. A divalent metal cation is bound by residues His-561, His-597, Asp-598, and Asp-718. Positions 823–855 are disordered; it reads EMKKQEEGNTTEKAVEDSGGGGDDKKSKTCLML. At Cys-852 the chain carries Cysteine methyl ester. The S-geranylgeranyl cysteine moiety is linked to residue Cys-852. The propeptide at 853–855 is removed in mature form; the sequence is LML.

The protein belongs to the cyclic nucleotide phosphodiesterase family. Composed of two alpha' subunits that are associated with 3 smaller proteins of 11, 13, and 15 kDa. Requires a divalent metal cation as cofactor.

Its subcellular location is the cell membrane. The enzyme catalyses 3',5'-cyclic GMP + H2O = GMP + H(+). Its function is as follows. As cone-specific cGMP phosphodiesterase, it plays an essential role in light detection and cone phototransduction by rapidly decreasing intracellular levels of cGMP. This is Cone cGMP-specific 3',5'-cyclic phosphodiesterase subunit alpha' (PDE6C) from Bos taurus (Bovine).